Here is a 68-residue protein sequence, read N- to C-terminus: Large ribosomal subunit protein bL31 (68 aa).

Residues C16, C18, C38, and C41 each contribute to the Zn(2+) site.

It belongs to the bacterial ribosomal protein bL31 family. Type A subfamily. As to quaternary structure, part of the 50S ribosomal subunit. Requires Zn(2+) as cofactor.

Binds the 23S rRNA. This Thiobacillus denitrificans (strain ATCC 25259 / T1) protein is Large ribosomal subunit protein bL31.